Here is a 489-residue protein sequence, read N- to C-terminus: Hydantoin permease (489 aa).

The next 12 helical transmembrane spans lie at 30 to 50 (FSLA…IAAG), 58 to 78 (VWQV…LLFF), 104 to 124 (LIPI…QTWL), 144 to 164 (LWIV…ITFI), 167 to 187 (MNVF…YLML), 207 to 227 (MPFS…VVSI), 258 to 278 (LGMV…MVLV), 299 to 321 (AILF…NLLS), 339 to 359 (GVIV…AGVL), 362 to 382 (FLNL…SDYF), 405 to 424 (RGVN…VSFL), and 428 to 445 (LMFV…IPAM). A38 and I41 together coordinate Na(+). A substrate-binding site is contributed by Q121. Position 219 (G219) interacts with substrate. Na(+) is bound by residues A309, S312, and T313. N318 contacts substrate. The segment at 468–489 (PIGPVAPADESATANTKEQNQR) is disordered. Over residues 479–489 (ATANTKEQNQR) the composition is skewed to polar residues.

Belongs to the purine-cytosine permease (2.A.39) family.

Its subcellular location is the membrane. With respect to regulation, inhibited by dinitrophenol, 5-(2-naphthylmethyl)-D-hydantoin (D-NMH), 5-(2-naphthylmethyl)-L-hydantoin (L-NMH), 5-bromovinylhydantoin (BVH) and 5-indolylmethyl-L-hydantoin (L-IMH). The affinity of benzyl-hydantoin is increased over 10-fold in the presence of 15 mM of sodium. In terms of biological role, nucleobase-proton symporter that mediates the sodium-dependent binding and uptake of 5-aryl-substituted hydantoin compounds. 5-indolyl methyl hydantoin and 5-benzyl hydantoin are the preferred substrates, with selectivity for a hydrophobic substituent in position 5 of hydantoin and for the L isomer over the D isomer. The chain is Hydantoin permease from Microbacterium maritypicum (Microbacterium liquefaciens).